Reading from the N-terminus, the 255-residue chain is Probable cyclic nucleotide phosphodiesterase syc0937_d (255 aa).

Fe cation contacts are provided by Asp-19, His-21, Asp-59, Asn-89, His-157, His-196, and His-198. Residues His-21, Asp-59, and 89-90 (NH) contribute to the AMP site. His-198 lines the AMP pocket.

This sequence belongs to the cyclic nucleotide phosphodiesterase class-III family. The cofactor is Fe(2+).

In Synechococcus sp. (strain ATCC 27144 / PCC 6301 / SAUG 1402/1) (Anacystis nidulans), this protein is Probable cyclic nucleotide phosphodiesterase syc0937_d.